A 348-amino-acid polypeptide reads, in one-letter code: E3 ubiquitin-protein ligase IE2 (348 aa).

Residues 1 to 11 (MSRQINANTPV) are compositionally biased toward polar residues. Residues 1 to 32 (MSRQINANTPVSRRRSGLRGRRLSYSPEDAVP) form a disordered region. Residues 12-22 (SRRRSGLRGRR) show a composition bias toward basic residues. The segment at 179-227 (CHICSCFFTDIKNYNSSFVTTSECNHAVCFKCYTSIMFDKELFKCSMCN) adopts an RING-type zinc-finger fold. Positions 272-306 (KVPEQNDVQKLQAELAELRAEMASMRAEMASKQLG) form a coiled coil. The segment at 312-333 (ENRRGSSSSGASSSSTSTSSSS) is disordered. Residues 316 to 333 (GSSSSGASSSSTSTSSSS) are compositionally biased toward low complexity.

It belongs to the alphabaculovirus IE2 protein family. In terms of assembly, homooligomer. Post-translationally, auto-ubiquitinated.

Its subcellular location is the host nucleus. It catalyses the reaction S-ubiquitinyl-[E2 ubiquitin-conjugating enzyme]-L-cysteine + [acceptor protein]-L-lysine = [E2 ubiquitin-conjugating enzyme]-L-cysteine + N(6)-ubiquitinyl-[acceptor protein]-L-lysine.. In terms of biological role, RING-finger E3 ubiquitin ligase that plays an important regulatory role during the initial stages of infection. Migrates to specific nuclear foci early in infection supposely to prepare the sites for viral replication by targeting and ubiquitinating host proteins. The protein is E3 ubiquitin-protein ligase IE2 (IE2) of Choristoneura fumiferana (Spruce budworm moth).